The primary structure comprises 325 residues: Terpene synthase 11 (325 aa).

The DDxx(x)D/E motif signature appears at 97–102 (DDEYLE). The short motif at 227–235 (NDIYSFVKE) is the NDxxSxxxD/E motif element.

Belongs to the terpene synthase family.

It carries out the reaction (2E,6E)-farnesyl diphosphate = (E)-beta-farnesene + diphosphate. The catalysed reaction is (2E,6E)-farnesyl diphosphate = (3E,6E)-alpha-farnesene + diphosphate. It catalyses the reaction geranylgeranyl diphosphate + H2O = (S)-(+)-nephthenol + diphosphate. Its function is as follows. Terpene synthase that converts its substrate farnesyl diphosphate (FPP) into the sesquiterpenes (E)-beta-farnesene and (E,E)-alpha-farnesene. TPS11 also converts geranylgeranyl diphosphate (GGPP) into the diterpene (S)-nephthenol. The polypeptide is Terpene synthase 11 (Dictyostelium purpureum (Slime mold)).